Consider the following 471-residue polypeptide: MAPHVLVVPFPGQGHMNPMVQFAKRLASKGVATTLVTTRFIQRTADVDAHPAMVEAISDGHDEGGFASAAGVAEYLEKQAAAASASLASLVEARASSADAFTCVVYDSYEDWVLPVARRMGLPAVPFSTQSCAVSAVYYHFSQGRLAVPPGAAADGSDGGAGAAALSEAFLGLPEMERSELPSFVFDHGPYPTIAMQAIKQFAHAGKDDWVLFNSFEELETEVLAGLTKYLKARAIGPCVPLPTAGRTAGANGRITYGANLVKPEDACTKWLDTKPDRSVAYVSFGSLASLGNAQKEELARGLLAAGKPFLWVVRASDEHQVPRYLLAEATATGAAMVVPWCPQLDVLAHPAVGCFVTHCGWNSTLEALSFGVPMVAMALWTDQPTNARNVELAWGAGVRARRDAGAGVFLRGEVERCVRAVMDGGEAASAARKAAGEWRDRARAAVAPGGSSDRNLDEFVQFVRAGATEK.

Histidine 15 functions as the Proton acceptor in the catalytic mechanism. Histidine 15 contributes to the an anthocyanidin binding site. The active-site Charge relay is aspartate 107. Residues threonine 129, glutamine 344, histidine 359, tryptophan 362, asparagine 363, serine 364, glutamate 367, aspartate 383, and glutamine 384 each contribute to the UDP-alpha-D-glucose site.

This sequence belongs to the UDP-glycosyltransferase family.

The enzyme catalyses (indol-3-yl)acetate + UDP-alpha-D-glucose = 1-O-(indol-3-ylacetyl)-beta-D-glucose + UDP. It functions in the pathway plant hormone metabolism; auxin conjugation. The polypeptide is Indole-3-acetate beta-glucosyltransferase (IAGLU) (Zea mays (Maize)).